Here is a 271-residue protein sequence, read N- to C-terminus: Type III pantothenate kinase (271 aa).

6-13 contributes to the ATP binding site; sequence DVRNTHTV. Residue 109–112 participates in substrate binding; sequence GADR. Aspartate 111 functions as the Proton acceptor in the catalytic mechanism. Aspartate 131 serves as a coordination point for K(+). Serine 134 provides a ligand contact to ATP. Threonine 186 serves as a coordination point for substrate.

Belongs to the type III pantothenate kinase family. Homodimer. It depends on NH4(+) as a cofactor. K(+) is required as a cofactor.

Its subcellular location is the cytoplasm. The catalysed reaction is (R)-pantothenate + ATP = (R)-4'-phosphopantothenate + ADP + H(+). It functions in the pathway cofactor biosynthesis; coenzyme A biosynthesis; CoA from (R)-pantothenate: step 1/5. Catalyzes the phosphorylation of pantothenate (Pan), the first step in CoA biosynthesis. The sequence is that of Type III pantothenate kinase from Mycobacteroides abscessus (strain ATCC 19977 / DSM 44196 / CCUG 20993 / CIP 104536 / JCM 13569 / NCTC 13031 / TMC 1543 / L948) (Mycobacterium abscessus).